The primary structure comprises 373 residues: Indole glucosinolate O-methyltransferase 1 (373 aa).

5 residues coordinate S-adenosyl-L-homocysteine: G217, D240, D260, M261, and K274. Catalysis depends on H278, which acts as the Proton acceptor.

This sequence belongs to the class I-like SAM-binding methyltransferase superfamily. Cation-independent O-methyltransferase family. In terms of assembly, interacts with B'GAMMA.

Its pathway is secondary metabolite biosynthesis. Its function is as follows. Involved in indole glucosinolate biosynthesis. Catalyzes methoxylation reactions of the glucosinolate indole ring. Converts the hydroxy intermediates 4-hydroxy-indol-3-yl-methylglucosinolate (4OH-I3M) and 1-hydroxy-indol-3-yl-methylglucosinolate (1OH-I3M) to 4-methoxy-indol-3-yl-methylglucosinolate (4MO-I3M) and 1-methoxy-indol-3-yl-methylglucosinolate (1MO-I3M), respectively. This is Indole glucosinolate O-methyltransferase 1 from Arabidopsis thaliana (Mouse-ear cress).